The following is a 338-amino-acid chain: DNA-directed RNA polymerase subunit alpha (338 aa).

Residues 1 to 234 (MIHKNWAELI…DQLGIFVNFE (234 aa)) are alpha N-terminal domain (alpha-NTD). The segment at 250–338 (FNPLLLKKVD…DLAKKFEDSF (89 aa)) is alpha C-terminal domain (alpha-CTD).

This sequence belongs to the RNA polymerase alpha chain family. In terms of assembly, homodimer. The RNAP catalytic core consists of 2 alpha, 1 beta, 1 beta' and 1 omega subunit. When a sigma factor is associated with the core the holoenzyme is formed, which can initiate transcription.

The catalysed reaction is RNA(n) + a ribonucleoside 5'-triphosphate = RNA(n+1) + diphosphate. DNA-dependent RNA polymerase catalyzes the transcription of DNA into RNA using the four ribonucleoside triphosphates as substrates. The polypeptide is DNA-directed RNA polymerase subunit alpha (Roseobacter denitrificans (strain ATCC 33942 / OCh 114) (Erythrobacter sp. (strain OCh 114))).